Reading from the N-terminus, the 183-residue chain is Heavy metal-associated isoprenylated plant protein 44 (183 aa).

The 64-residue stretch at 50–113 folds into the HMA domain; the sequence is LQTVELKVRM…AVRRAGKRAE (64 aa). Residues Cys61 and Cys64 each contribute to the a metal cation site. Position 180 is a cysteine methyl ester (Cys180). Cys180 carries S-farnesyl cysteine lipidation. A propeptide spans 181–183 (removed in mature form); that stretch reads RLM.

The protein belongs to the HIPP family.

Functionally, heavy-metal-binding protein. The sequence is that of Heavy metal-associated isoprenylated plant protein 44 from Arabidopsis thaliana (Mouse-ear cress).